Reading from the N-terminus, the 237-residue chain is NAD(P)H-quinone oxidoreductase subunit K (237 aa).

The [4Fe-4S] cluster site is built by Cys52, Cys53, Cys117, and Cys148.

This sequence belongs to the complex I 20 kDa subunit family. As to quaternary structure, NDH-1 can be composed of about 15 different subunits; different subcomplexes with different compositions have been identified which probably have different functions. It depends on [4Fe-4S] cluster as a cofactor.

It localises to the cellular thylakoid membrane. The enzyme catalyses a plastoquinone + NADH + (n+1) H(+)(in) = a plastoquinol + NAD(+) + n H(+)(out). The catalysed reaction is a plastoquinone + NADPH + (n+1) H(+)(in) = a plastoquinol + NADP(+) + n H(+)(out). Functionally, NDH-1 shuttles electrons from an unknown electron donor, via FMN and iron-sulfur (Fe-S) centers, to quinones in the respiratory and/or the photosynthetic chain. The immediate electron acceptor for the enzyme in this species is believed to be plastoquinone. Couples the redox reaction to proton translocation, and thus conserves the redox energy in a proton gradient. Cyanobacterial NDH-1 also plays a role in inorganic carbon-concentration. The polypeptide is NAD(P)H-quinone oxidoreductase subunit K (Thermosynechococcus vestitus (strain NIES-2133 / IAM M-273 / BP-1)).